A 335-amino-acid chain; its full sequence is Leukocyte immunoglobulin-like receptor subfamily B member 4A (335 aa).

An N-terminal signal peptide occupies residues 1-23 (MIAMLTVLLYLGLILEPRTAVQA). At 24–238 (GHLPKPIIWA…TEDGLETYQK (215 aa)) the chain is on the extracellular side. Ig-like C2-type domains are found at residues 42-125 (YTSV…ENPS) and 124-212 (PSLS…KPSN). An intrachain disulfide couples C49 to C98. 2 N-linked (GlcNAc...) asparagine glycosylation sites follow: N133 and N191. A disulfide bridge links C144 with C196. The chain crosses the membrane as a helical span at residues 239 to 260 (ILIGVLVSFLLLFFLLLFLILI). At 261 to 335 (GYQYGHKKKA…CIRTQEQNNS (75 aa)) the chain is on the cytoplasmic side. 2 consecutive short sequence motifs (ITIM motif) follow at residues 298–303 (IVYAQV) and 320–325 (VTYAQL).

As to quaternary structure, interacts (when tyrosine phosphorylated) with SH2 domain-containing phosphatases PTPN6/SHP-1 and PTPN11/SHP-2; interaction with PTPN6 enhances inhibition of mast cell activation. In terms of processing, tyrosine phosphorylated. In terms of tissue distribution, expressed on mast cells and natural killer cells (at protein level). Expressed on neutrophils (at protein level). Expressed on eosinophils (at protein level). Expressed on dendritic cells (at protein level). Expressed on memory and marginal zone B cells (at protein level). Expressed on CD8 T cells (at protein level). Expressed in the uterus of pregnant mice where it is detected at day 4.0 of pregnancy with levels dropping at day 4.5. Highly expressed in the luminal epithelium of uterine endometrium with lower levels in the glandular epithelium.

The protein localises to the cell membrane. Functionally, inhibitory receptor involved in the down-regulation of the immune response. Receptor for FN1. Receptor for integrin ITGAV/ITGB3. Inhibits IgE-mediated mast cell activation, at least in part through interaction with ITGAV/ITGB3. Also inhibits KITLG/SCF-mediated mast cell activation. Through interaction with ITGAV/ITGB3, inhibits antibody production by memory and marginal zone B cells, probably by suppressing their differentiation into plasma cells. Inhibits IFNG production by CD8 T cells, CD4 T cells and natural killer cells. Inhibits antigen presentation by dendritic cells to T cells, preventing T cell activation. Inhibits lipopolysaccharide-mediated neutrophil-dependent vascular injury. Suppresses the allergic inflammatory response by inhibiting infiltration of neutrophils and eosinophils and preventing mast cell degranulation. Inhibits lysis by natural killer cells. The polypeptide is Leukocyte immunoglobulin-like receptor subfamily B member 4A (Mus musculus (Mouse)).